Here is a 241-residue protein sequence, read N- to C-terminus: Phycocyanobilin:ferredoxin oxidoreductase (241 aa).

It belongs to the HY2 family.

The catalysed reaction is (2R,3Z)-phycocyanobilin + 4 oxidized [2Fe-2S]-[ferredoxin] = biliverdin IXalpha + 4 reduced [2Fe-2S]-[ferredoxin] + 4 H(+). Functionally, catalyzes the four-electron reduction of biliverdin IX-alpha (2-electron reduction at both the A and D rings); the reaction proceeds via an isolatable 2-electron intermediate, 181,182-dihydrobiliverdin. This Prochlorococcus marinus (strain MIT 9515) protein is Phycocyanobilin:ferredoxin oxidoreductase.